Here is a 485-residue protein sequence, read N- to C-terminus: Protein nucleotidyltransferase YdiU (485 aa).

Positions 90, 92, 93, 113, 125, 126, 176, and 183 each coordinate ATP. D252 (proton acceptor) is an active-site residue. 2 residues coordinate Mg(2+): N253 and D262. D262 serves as a coordination point for ATP.

Belongs to the SELO family. Mg(2+) serves as cofactor. The cofactor is Mn(2+).

It catalyses the reaction L-seryl-[protein] + ATP = 3-O-(5'-adenylyl)-L-seryl-[protein] + diphosphate. It carries out the reaction L-threonyl-[protein] + ATP = 3-O-(5'-adenylyl)-L-threonyl-[protein] + diphosphate. The catalysed reaction is L-tyrosyl-[protein] + ATP = O-(5'-adenylyl)-L-tyrosyl-[protein] + diphosphate. The enzyme catalyses L-histidyl-[protein] + UTP = N(tele)-(5'-uridylyl)-L-histidyl-[protein] + diphosphate. It catalyses the reaction L-seryl-[protein] + UTP = O-(5'-uridylyl)-L-seryl-[protein] + diphosphate. It carries out the reaction L-tyrosyl-[protein] + UTP = O-(5'-uridylyl)-L-tyrosyl-[protein] + diphosphate. Nucleotidyltransferase involved in the post-translational modification of proteins. It can catalyze the addition of adenosine monophosphate (AMP) or uridine monophosphate (UMP) to a protein, resulting in modifications known as AMPylation and UMPylation. This chain is Protein nucleotidyltransferase YdiU, found in Aliivibrio salmonicida (strain LFI1238) (Vibrio salmonicida (strain LFI1238)).